The chain runs to 351 residues: Peptide chain release factor 1 (351 aa).

Q229 carries the N5-methylglutamine modification.

This sequence belongs to the prokaryotic/mitochondrial release factor family. Post-translationally, methylated by PrmC. Methylation increases the termination efficiency of RF1.

It localises to the cytoplasm. Its function is as follows. Peptide chain release factor 1 directs the termination of translation in response to the peptide chain termination codons UAG and UAA. The sequence is that of Peptide chain release factor 1 from Cereibacter sphaeroides (strain KD131 / KCTC 12085) (Rhodobacter sphaeroides).